The following is a 171-amino-acid chain: Ly6/PLAUR domain-containing protein 6 (171 aa).

A signal peptide spans 1–25 (MEPSPALAWLLLLSLVADCLKAAQS). The region spanning 47–141 (FKCFTCEKAA…PRNETDATFA (95 aa)) is the UPAR/Ly6 domain. Intrachain disulfides connect Cys49/Cys77, Cys52/Cys61, Cys70/Cys96, Cys102/Cys121, Cys107/Cys118, and Cys122/Cys127. A NxI motif motif is present at residues 88-90 (NSI). Asn134 and Asn147 each carry an N-linked (GlcNAc...) asparagine glycan. Residue Asn147 is the site of GPI-anchor amidated asparagine attachment. Positions 148 to 171 (QTNGHPHCVSVIVSCLWVWLGLTL) are cleaved as a propeptide — removed in mature form.

Interacts with nicotinic acetylcholine receptors (nAChRs) including CHRNA3, CHRNA4, CHRNA5, CHRNA6, CHRNA7, CHRNB2 and CHRNB4. Interacts (via NxI motif) with LRP6. Detected in the frontal cortex and hippocampus (at protein level). Highly expressed in the brain and spinal cord, as well as dorsal root and trigeminal ganglia.

The protein resides in the secreted. It localises to the cytoplasm. The protein localises to the cell membrane. Its subcellular location is the synapse. It is found in the synaptosome. The protein resides in the membrane raft. It localises to the cell projection. The protein localises to the dendrite. Its subcellular location is the perikaryon. Functionally, acts as a modulator of nicotinic acetylcholine receptors (nAChRs) function in the brain. Inhibits nicotine-induced Ca(2+) influx through nAChRs. In vitro, specifically inhibits alpha-3:beta-4 and alpha-7 nAChR currents in an allosteric manner. Acts as a positive regulator of Wnt/beta-catenin signaling. The polypeptide is Ly6/PLAUR domain-containing protein 6 (Lypd6) (Mus musculus (Mouse)).